Consider the following 260-residue polypeptide: Indole-3-glycerol phosphate synthase (260 aa).

Belongs to the TrpC family.

It carries out the reaction 1-(2-carboxyphenylamino)-1-deoxy-D-ribulose 5-phosphate + H(+) = (1S,2R)-1-C-(indol-3-yl)glycerol 3-phosphate + CO2 + H2O. Its pathway is amino-acid biosynthesis; L-tryptophan biosynthesis; L-tryptophan from chorismate: step 4/5. The protein is Indole-3-glycerol phosphate synthase of Staphylococcus aureus (strain MSSA476).